Reading from the N-terminus, the 154-residue chain is Interleukin-2 (154 aa).

The N-terminal stretch at 1–20 (MYKMQLLSCIALTLALVANG) is a signal peptide. Residue T23 is glycosylated (O-linked (GalNAc...) threonine). A disulfide bridge links C78 with C126.

It belongs to the IL-2 family.

The protein resides in the secreted. Cytokine produced by activated CD4-positive helper T-cells and to a lesser extend activated CD8-positive T-cells and natural killer (NK) cells that plays pivotal roles in the immune response and tolerance. Binds to a receptor complex composed of either the high-affinity trimeric IL-2R (IL2RA/CD25, IL2RB/CD122 and IL2RG/CD132) or the low-affinity dimeric IL-2R (IL2RB and IL2RG). Interaction with the receptor leads to oligomerization and conformation changes in the IL-2R subunits resulting in downstream signaling starting with phosphorylation of JAK1 and JAK3. In turn, JAK1 and JAK3 phosphorylate the receptor to form a docking site leading to the phosphorylation of several substrates including STAT5. This process leads to activation of several pathways including STAT, phosphoinositide-3-kinase/PI3K and mitogen-activated protein kinase/MAPK pathways. Functions as a T-cell growth factor and can increase NK-cell cytolytic activity as well. Promotes strong proliferation of activated B-cells and subsequently immunoglobulin production. Plays a pivotal role in regulating the adaptive immune system by controlling the survival and proliferation of regulatory T-cells, which are required for the maintenance of immune tolerance. Moreover, participates in the differentiation and homeostasis of effector T-cell subsets, including Th1, Th2, Th17 as well as memory CD8-positive T-cells. The sequence is that of Interleukin-2 (IL2) from Delphinapterus leucas (Beluga whale).